The sequence spans 364 residues: Protein PTOV1 homolog (364 aa).

Residues 187 to 207 (AKRKPGVKTPKQPQPEEPPPV) are disordered.

The protein belongs to the Mediator complex subunit 25 family. PTOV1 subfamily.

The protein is Protein PTOV1 homolog of Drosophila melanogaster (Fruit fly).